We begin with the raw amino-acid sequence, 451 residues long: Probable plasmid replicative DNA helicase (451 aa).

An SF4 helicase domain is found at 194-451 (QNSFFDAFPT…SKFSAIKKVW (258 aa)). Position 225-232 (225-232 (ARPSIGKT)) interacts with ATP.

The protein belongs to the helicase family. DnaB subfamily. As to quaternary structure, homohexamer.

The catalysed reaction is Couples ATP hydrolysis with the unwinding of duplex DNA at the replication fork by translocating in the 5'-3' direction. This creates two antiparallel DNA single strands (ssDNA). The leading ssDNA polymer is the template for DNA polymerase III holoenzyme which synthesizes a continuous strand.. The enzyme catalyses ATP + H2O = ADP + phosphate + H(+). In terms of biological role, a replicative DNA helicase, it participates in initiation and elongation during DNA replication. Travels ahead of the DNA replisome, separating dsDNA into templates for DNA synthesis. A processive ATP-dependent 5'-3' DNA helicase it has DNA-dependent ATPase activity. Its function is as follows. The plasmid this protein is encoded on is thought to be required for growth within mammalian cells. This chain is Probable plasmid replicative DNA helicase, found in Chlamydia trachomatis serovar L2 (strain ATCC VR-902B / DSM 19102 / 434/Bu).